The primary structure comprises 451 residues: BAHD acyltransferase At3g29680 (451 aa).

Residues His161 and Asp393 each act as proton acceptor in the active site.

Belongs to the plant acyltransferase family.

This is BAHD acyltransferase At3g29680 from Arabidopsis thaliana (Mouse-ear cress).